A 468-amino-acid polypeptide reads, in one-letter code: 6-phospho-beta-galactosidase (468 aa).

Residues Gln19, His116, Asn159, Glu160, and Asn297 each coordinate D-galactose 6-phosphate. Glu160 (proton donor) is an active-site residue. Glu375 serves as the catalytic Nucleophile. Residues Ser428, Trp429, Lys435, and Tyr437 each contribute to the D-galactose 6-phosphate site.

It belongs to the glycosyl hydrolase 1 family.

It carries out the reaction a 6-phospho-beta-D-galactoside + H2O = D-galactose 6-phosphate + an alcohol. It functions in the pathway carbohydrate metabolism; lactose degradation; D-galactose 6-phosphate and beta-D-glucose from lactose 6-phosphate: step 1/1. The polypeptide is 6-phospho-beta-galactosidase (Streptococcus pyogenes serotype M4 (strain MGAS10750)).